The sequence spans 54 residues: UPF0391 membrane protein Rfer_1875 (54 aa).

2 helical membrane-spanning segments follow: residues 5 to 25 (AVVF…GIAA) and 30 to 50 (IGKI…LFGL).

Belongs to the UPF0391 family.

It localises to the cell membrane. The polypeptide is UPF0391 membrane protein Rfer_1875 (Albidiferax ferrireducens (strain ATCC BAA-621 / DSM 15236 / T118) (Rhodoferax ferrireducens)).